The sequence spans 205 residues: Inactive ribonuclease-like protein 9 (205 aa).

The signal sequence occupies residues 1-26 (MMRTLITIHPLPLLLLLQQLLQPVQF). Intrachain disulfides connect cysteine 98–cysteine 153, cysteine 116–cysteine 168, and cysteine 123–cysteine 130. N-linked (GlcNAc...) asparagine glycans are attached at residues asparagine 131 and asparagine 143.

Belongs to the pancreatic ribonuclease family.

It localises to the secreted. Functionally, does not exhibit any ribonuclease activity. This chain is Inactive ribonuclease-like protein 9 (RNASE9), found in Gorilla gorilla gorilla (Western lowland gorilla).